The primary structure comprises 362 residues: MGNTFGHLFRITTFGESHGGGVGVVIDGCPPLLEISPEEIQLELDRRRPGQSKITTPRKEADTCEILSGVYEGKTLGTPISILVRNKDTRPQDYDEMAQKYRPSHADATYDAKYGIRNWQGGGRSSARETIGRVAAGAIAKKILRQVANVEVIGYVKRIKDLEGVVDPNTVTLDQVESNIVRCPDGELADRMIELIEQTGRQGDSIGGVVECVARNVPKGLGEPVFDKLEADIAKAVMSLPASKGFEIGSGFAGTLLTGFEHNDEYYIDENGEIRTVTNRSGGIQGGIANGENIILRVAFKPTATIRKEQKTVTREGEETLLAAKGRHDPCVLPRAVPMVEAMVALVLCDHLLRHHGQCKVL.

Residue R47 coordinates NADP(+). Residues 124–126 (RSS), G286, 301–305 (KPTAT), and R327 each bind FMN.

It belongs to the chorismate synthase family. As to quaternary structure, homotetramer. FMNH2 serves as cofactor.

It carries out the reaction 5-O-(1-carboxyvinyl)-3-phosphoshikimate = chorismate + phosphate. It participates in metabolic intermediate biosynthesis; chorismate biosynthesis; chorismate from D-erythrose 4-phosphate and phosphoenolpyruvate: step 7/7. Its function is as follows. Catalyzes the anti-1,4-elimination of the C-3 phosphate and the C-6 proR hydrogen from 5-enolpyruvylshikimate-3-phosphate (EPSP) to yield chorismate, which is the branch point compound that serves as the starting substrate for the three terminal pathways of aromatic amino acid biosynthesis. This reaction introduces a second double bond into the aromatic ring system. In Trichormus variabilis (strain ATCC 29413 / PCC 7937) (Anabaena variabilis), this protein is Chorismate synthase.